A 492-amino-acid chain; its full sequence is NADH-quinone oxidoreductase subunit N (492 aa).

Transmembrane regions (helical) follow at residues 13 to 33, 42 to 62, 79 to 99, 111 to 131, 133 to 153, 168 to 188, 211 to 231, 251 to 271, 284 to 304, 318 to 340, 344 to 366, 388 to 408, 426 to 446, and 463 to 483; these read MMTP…MDLF, PLAW…IGLI, FGKA…LLAF, GEFY…ASSG, LITL…LAGI, VING…IFGL, YILA…ISSV, FLSV…FITI, SLLF…MIIG, FAYS…SWVM, IWFY…QRIS, AVAM…AGFI, VLAA…FGIF, and PIGL…FGVV.

The protein belongs to the complex I subunit 2 family. As to quaternary structure, NDH-1 is composed of 14 different subunits. Subunits NuoA, H, J, K, L, M, N constitute the membrane sector of the complex.

The protein localises to the cell membrane. It catalyses the reaction a quinone + NADH + 5 H(+)(in) = a quinol + NAD(+) + 4 H(+)(out). Functionally, NDH-1 shuttles electrons from NADH, via FMN and iron-sulfur (Fe-S) centers, to quinones in the respiratory chain. The immediate electron acceptor for the enzyme in this species is believed to be a menaquinone. Couples the redox reaction to proton translocation (for every two electrons transferred, four hydrogen ions are translocated across the cytoplasmic membrane), and thus conserves the redox energy in a proton gradient. This chain is NADH-quinone oxidoreductase subunit N, found in Geobacillus sp. (strain WCH70).